Reading from the N-terminus, the 400-residue chain is MSNKLVLVLNCGSSSLKFAIINPVNGEKHLFGQAECLNLPNAQIKWNLNGIQYDTELSSGSTHDEALNFIEKNIYNQQPELLSQLTAIGHRIVHGRDYFTQSVIINDEVIKKIQGSIPFAPLHNPANLIGIYKAKKFFPKLASKNVAVFDTAFHQTMPEQSYLYALPYDLYQKNGIRRYGAHGISHYYVTHEAAKLLNKPVEKINLITCHLGSGGSISAIYHGQCIDTSMGLTPLEGLVMGTRSGDIDPAIIFHMYDILGMSIQQIYTLLTKKSGILGLTGVTSDCRYIEDNYIDKEDARRTINVYCHRLAKYIGAYSTLMDEVLDAVIFTGGIGENAAIVRQLTLSKLTLLGFQIDQNRNFAARFGTSGKITTDNSRPALVIPTNEELVIAQDTARLTA.

Asn10 provides a ligand contact to Mg(2+). Lys17 serves as a coordination point for ATP. Arg91 serves as a coordination point for substrate. Asp150 serves as the catalytic Proton donor/acceptor. ATP is bound by residues 210–214 (HLGSG), 285–287 (DCR), and 333–337 (GIGEN). Glu387 provides a ligand contact to Mg(2+).

This sequence belongs to the acetokinase family. In terms of assembly, homodimer. Mg(2+) is required as a cofactor. Mn(2+) serves as cofactor.

It is found in the cytoplasm. The catalysed reaction is acetate + ATP = acetyl phosphate + ADP. It participates in metabolic intermediate biosynthesis; acetyl-CoA biosynthesis; acetyl-CoA from acetate: step 1/2. In terms of biological role, catalyzes the formation of acetyl phosphate from acetate and ATP. Can also catalyze the reverse reaction. This Baumannia cicadellinicola subsp. Homalodisca coagulata protein is Acetate kinase.